The primary structure comprises 492 residues: UDP-N-acetylmuramoyl-L-alanyl-D-glutamate--2,6-diaminopimelate ligase (492 aa).

Position 30 (S30) interacts with UDP-N-acetyl-alpha-D-muramoyl-L-alanyl-D-glutamate. 114 to 120 (GTNGKTS) serves as a coordination point for ATP. Residues 156–157 (TT), S183, Q189, and R191 contribute to the UDP-N-acetyl-alpha-D-muramoyl-L-alanyl-D-glutamate site. Residue K223 is modified to N6-carboxylysine. Residues R389, 413–416 (DNPR), G462, and E466 contribute to the meso-2,6-diaminopimelate site. The short motif at 413 to 416 (DNPR) is the Meso-diaminopimelate recognition motif element.

Belongs to the MurCDEF family. MurE subfamily. It depends on Mg(2+) as a cofactor. Post-translationally, carboxylation is probably crucial for Mg(2+) binding and, consequently, for the gamma-phosphate positioning of ATP.

The protein resides in the cytoplasm. The enzyme catalyses UDP-N-acetyl-alpha-D-muramoyl-L-alanyl-D-glutamate + meso-2,6-diaminopimelate + ATP = UDP-N-acetyl-alpha-D-muramoyl-L-alanyl-gamma-D-glutamyl-meso-2,6-diaminopimelate + ADP + phosphate + H(+). It functions in the pathway cell wall biogenesis; peptidoglycan biosynthesis. Its function is as follows. Catalyzes the addition of meso-diaminopimelic acid to the nucleotide precursor UDP-N-acetylmuramoyl-L-alanyl-D-glutamate (UMAG) in the biosynthesis of bacterial cell-wall peptidoglycan. The polypeptide is UDP-N-acetylmuramoyl-L-alanyl-D-glutamate--2,6-diaminopimelate ligase (Neisseria meningitidis serogroup A / serotype 4A (strain DSM 15465 / Z2491)).